The sequence spans 568 residues: U6 small nuclear RNA (adenine-(43)-N(6))-methyltransferase (568 aa).

A disordered region spans residues 1–20; sequence MSEIDTNDIKKEMDNKNYRD. A compositionally biased stretch (basic and acidic residues) spans 7–20; it reads NDIKKEMDNKNYRD. Residues Arg-117, Gly-151, Asp-175, and Asn-250 each coordinate S-adenosyl-L-methionine. 3 disordered regions span residues 363 to 383, 403 to 431, and 503 to 538; these read KENN…INNN, NLDS…NNNN, and DPKI…NKNN. Low complexity-rich tracts occupy residues 365 to 383, 409 to 431, and 507 to 538; these read NNNI…INNN, NNNN…NNNN, and NNNN…NKNN.

It belongs to the methyltransferase superfamily. METTL16/RlmF family.

It carries out the reaction adenosine in U6 snRNA + S-adenosyl-L-methionine = N(6)-methyladenosine in U6 snRNA + S-adenosyl-L-homocysteine + H(+). RNA N6-methyltransferase that mediates N6-methylation of adenine of U6 small nuclear RNA (U6 snRNA). The protein is U6 small nuclear RNA (adenine-(43)-N(6))-methyltransferase of Dictyostelium discoideum (Social amoeba).